Consider the following 353-residue polypeptide: Guanine nucleotide-binding protein subunit alpha (353 aa).

Residues 1-26 are disordered; it reads MGCGMSVEEKEGKARNEEIENQLKRD. Residue G2 is the site of N-myristoyl glycine attachment. The S-palmitoyl cysteine moiety is linked to residue C3. Residues 7-26 show a composition bias toward basic and acidic residues; sequence VEEKEGKARNEEIENQLKRD. Positions 32–353 constitute a G-alpha domain; that stretch reads NEIKMLLLGA…QENLRLCGLI (322 aa). The tract at residues 35–48 is G1 motif; that stretch reads KMLLLGAGESGKST. Residues E43, S44, G45, K46, S47, T48, D150, L175, T181, G203, N269, K270, D272, and A325 each contribute to the GTP site. Residue S47 coordinates Mg(2+). Residues 173-181 form a G2 motif region; sequence DVLRSRVKT. T181 provides a ligand contact to Mg(2+). Residues 196–205 form a G3 motif region; sequence YRMFDVGGQR. A G4 motif region spans residues 265 to 272; that stretch reads ILFLNKID. The tract at residues 323-328 is G5 motif; that stretch reads TCATDT.

It belongs to the G-alpha family. G(q) subfamily. As to quaternary structure, g proteins are composed of 3 units; alpha, beta and gamma. The alpha chain contains the guanine nucleotide binding site. The cofactor is Mg(2+).

Functionally, guanine nucleotide-binding proteins (G proteins) are involved as modulators or transducers in various transmembrane signaling systems. The chain is Guanine nucleotide-binding protein subunit alpha (SSG-1) from Sporothrix schenckii (strain ATCC 58251 / de Perez 2211183) (Rose-picker's disease fungus).